The sequence spans 166 residues: Glycine-rich RNA-binding protein GRP1A (166 aa).

The region spanning 8-86 is the RRM domain; it reads YRCFVGGLAW…RSITVNEAQS (79 aa). A disordered region spans residues 68 to 166; the sequence is GMNGQDLDGR…YGGSGGGGGW (99 aa). 2 stretches are compositionally biased toward gly residues: residues 88–146 and 153–166; these read GSGG…YGGG and EGGGYGGSGGGGGW.

Predominantly expressed in meristematic and growing tissue.

The protein resides in the nucleus. Functionally, may play a general role in circadian phenomena associated with meristematic tissue. This Sinapis alba (White mustard) protein is Glycine-rich RNA-binding protein GRP1A.